A 283-amino-acid chain; its full sequence is 4-diphosphocytidyl-2-C-methyl-D-erythritol kinase (283 aa).

Lysine 10 is an active-site residue. Residue 99–109 (PMGGGLGGGSS) participates in ATP binding. Aspartate 141 is a catalytic residue.

The protein belongs to the GHMP kinase family. IspE subfamily. Homodimer.

It carries out the reaction 4-CDP-2-C-methyl-D-erythritol + ATP = 4-CDP-2-C-methyl-D-erythritol 2-phosphate + ADP + H(+). Its pathway is isoprenoid biosynthesis; isopentenyl diphosphate biosynthesis via DXP pathway; isopentenyl diphosphate from 1-deoxy-D-xylulose 5-phosphate: step 3/6. Functionally, catalyzes the phosphorylation of the position 2 hydroxy group of 4-diphosphocytidyl-2C-methyl-D-erythritol. This chain is 4-diphosphocytidyl-2-C-methyl-D-erythritol kinase, found in Shigella dysenteriae serotype 1 (strain Sd197).